The chain runs to 345 residues: uncharacterized protein (345 aa).

The next 8 membrane-spanning stretches (helical) occupy residues 9–31 (VVAF…AAFV), 84–103 (TLVA…TYLL), 116–138 (YFSL…ILYT), 148–170 (VPMQ…SGIF), 182–204 (VVFV…TIHA), 269–286 (WFFW…GVLG), 291–308 (ISHY…IAGY), and 313–335 (HGLT…VFFI).

It localises to the cell membrane. This is an uncharacterized protein from Treponema pallidum (strain Nichols).